Consider the following 218-residue polypeptide: Claudin-3 (218 aa).

At 1–8 (MSMGLEIA) the chain is on the cytoplasmic side. A helical transmembrane segment spans residues 9–29 (GTSLAVLGWLSTIVCCALPMW). Over 30–80 (RVTAFIGSSIITAQITWEGLWMNCVVQSTGQMQCKVYDSLLALPQDLQAAR) the chain is Extracellular. A helical membrane pass occupies residues 81–101 (ALIVVSILLAAFGLLVALVGA). Topologically, residues 102 to 115 (QCTNCVQDDTAKAK) are cytoplasmic. The helical transmembrane segment at 116 to 136 (ITIVAGVLFLLAALLTLVPVS) threads the bilayer. At 137–159 (WSANTIIRDFYNPLVPDAQKREM) the chain is on the extracellular side. Residues 160-180 (GAGLYVGWAAAALQLLGGALL) traverse the membrane as a helical segment. Topologically, residues 181–218 (CCSCPPRDKKYAPTKIVYSAPRSAGPGTSTAYDRKDYV) are cytoplasmic. Tyr-198 carries the phosphotyrosine modification. Residues Ser-199 and Ser-209 each carry the phosphoserine modification. Positions 217 to 218 (YV) are interactions with TJP1, TJP2 and TJP3.

It belongs to the claudin family. Can form homo- and heteropolymers with other CLDN. Homopolymers interact with CLDN1 and CLDN2 homopolymers. Interacts in cis (within the same plasma membrane) with CLDN19. Directly interacts with TJP1/ZO-1, TJP2/ZO-2 and TJP3/ZO-3.

It localises to the cell junction. It is found in the tight junction. The protein localises to the cell membrane. In terms of biological role, plays a major role in tight junction-specific obliteration of the intercellular space, through calcium-independent cell-adhesion activity. In Canis lupus familiaris (Dog), this protein is Claudin-3 (CLDN3).